The primary structure comprises 468 residues: MDFYSSLLPFLILIYLEFCSGFNRVCYYNGWALYRDSEHALKPENIDAFLCTHLVFAFGAIDETGTRIYVPEVFEDMHLFERMNELRHRNEDLNLVLSVGGWDMGSEAWSEVLASKDNMQTFVKEAIVYLRLHDFDGIDLDWEYPTFRGSKPIDREKFTQLIEIFRHEMDIEETPDDKWDLCLSVAVDPSEYMSSSSYEIDKITKNIDFYNLKMYDFHGHWNDPVLVKHHSALTSSSSLPSVNELAKMWVQRGVPKRKINIGIPFFGRSYRTAQPNATIGDPALGPGSDGGIGIPVSNICHLIRGGTKEHYLKEENVPFIVNGDEWVGFDNPRSVREKAALVRNNRLGGIMVWAIDMDDHSGWCGEKFPLMMSIIHGLGEYVDYMSDTLEAEREMINKKIRKAAREISYYSDKGNSTMAKKMEDKLNQLKDHLSAVQAHQSVQWANVQYSAGLGGKPLPSKDTPSWSW.

The signal sequence occupies residues 1 to 21 (MDFYSSLLPFLILIYLEFCSG). A GH18 domain is found at 22 to 381 (FNRVCYYNGW…MSIIHGLGEY (360 aa)). Cys-26 and Cys-51 are oxidised to a cystine. Residues 73–74 (VF) and 100–103 (GGWD) each bind chitin. Glu-143 acts as the Proton donor in catalysis. Residues Tyr-144, 213 to 216 (KMYD), and Trp-353 each bind chitin. Residues 386 to 440 (SDTLEAEREMINKKIRKAAREISYYSDKGNSTMAKKMEDKLNQLKDHLSAVQAHQ) are a coiled coil.

This sequence belongs to the glycosyl hydrolase 18 family. Prismatic layer of shell (at protein level). Expressed primarily in the mantle with highest level in the outer epithelium of the mantle edge and lower level in the mantle pallium.

It localises to the secreted. The enzyme catalyses Random endo-hydrolysis of N-acetyl-beta-D-glucosaminide (1-&gt;4)-beta-linkages in chitin and chitodextrins.. In Margaritifera margaritifera (Freshwater pearl mussel), this protein is Putative chitinase 1.